The primary structure comprises 33 residues: GLWSKIKAAGKEAAKAAAKAAGKAALNAVSEAV.

Valine 33 is subject to Valine amide.

As to expression, expressed by the skin glands.

Its subcellular location is the secreted. In terms of biological role, has antimicrobial activity. The sequence is that of Dermaseptin-J7 from Phasmahyla jandaia (Jandaia leaf frog).